The primary structure comprises 340 residues: Ketol-acid reductoisomerase (NADP(+)) (340 aa).

The region spanning 3–182 (VQMEYEKDVK…GAARVGLLET (180 aa)) is the KARI N-terminal Rossmann domain. NADP(+) contacts are provided by residues 26–29 (YGSQ), R49, S53, and 83–86 (DEIQ). The active site involves H108. Position 134 (G134) interacts with NADP(+). The region spanning 183-328 (TYKEETEEDL…AELRKAMPFV (146 aa)) is the KARI C-terminal knotted domain. The Mg(2+) site is built by D191, E195, E227, and E231. S252 contributes to the substrate binding site.

This sequence belongs to the ketol-acid reductoisomerase family. The cofactor is Mg(2+).

It catalyses the reaction (2R)-2,3-dihydroxy-3-methylbutanoate + NADP(+) = (2S)-2-acetolactate + NADPH + H(+). It carries out the reaction (2R,3R)-2,3-dihydroxy-3-methylpentanoate + NADP(+) = (S)-2-ethyl-2-hydroxy-3-oxobutanoate + NADPH + H(+). It participates in amino-acid biosynthesis; L-isoleucine biosynthesis; L-isoleucine from 2-oxobutanoate: step 2/4. Its pathway is amino-acid biosynthesis; L-valine biosynthesis; L-valine from pyruvate: step 2/4. Its function is as follows. Involved in the biosynthesis of branched-chain amino acids (BCAA). Catalyzes an alkyl-migration followed by a ketol-acid reduction of (S)-2-acetolactate (S2AL) to yield (R)-2,3-dihydroxy-isovalerate. In the isomerase reaction, S2AL is rearranged via a Mg-dependent methyl migration to produce 3-hydroxy-3-methyl-2-ketobutyrate (HMKB). In the reductase reaction, this 2-ketoacid undergoes a metal-dependent reduction by NADPH to yield (R)-2,3-dihydroxy-isovalerate. This chain is Ketol-acid reductoisomerase (NADP(+)), found in Streptococcus thermophilus (strain ATCC BAA-491 / LMD-9).